The primary structure comprises 381 residues: Chorismate synthase (381 aa).

The NADP(+) site is built by R41 and R47. FMN-binding positions include 127-129 (RAS), 247-248 (QA), G291, 306-310 (KPIPT), and R332.

Belongs to the chorismate synthase family. As to quaternary structure, homotetramer. FMNH2 serves as cofactor.

It carries out the reaction 5-O-(1-carboxyvinyl)-3-phosphoshikimate = chorismate + phosphate. It functions in the pathway metabolic intermediate biosynthesis; chorismate biosynthesis; chorismate from D-erythrose 4-phosphate and phosphoenolpyruvate: step 7/7. Functionally, catalyzes the anti-1,4-elimination of the C-3 phosphate and the C-6 proR hydrogen from 5-enolpyruvylshikimate-3-phosphate (EPSP) to yield chorismate, which is the branch point compound that serves as the starting substrate for the three terminal pathways of aromatic amino acid biosynthesis. This reaction introduces a second double bond into the aromatic ring system. The protein is Chorismate synthase of Anaeromyxobacter sp. (strain K).